We begin with the raw amino-acid sequence, 523 residues long: Succinate-semialdehyde dehydrogenase, mitochondrial (523 aa).

The transit peptide at 1 to 35 directs the protein to the mitochondrion; it reads MATCFLLRNFCAARPALRPPGRLLREPAGAQRRSY. An N6-acetyllysine; alternate modification is found at K114. N6-succinyllysine; alternate is present on K114. N6-succinyllysine is present on residues K123 and K172. Residues R201 and 216–219 each bind NAD(+); that span reads KPAE. R201 is a binding site for substrate. Position 253 is an N6-acetyllysine; alternate (K253). K253 is subject to N6-succinyllysine; alternate. 272–277 contacts NAD(+); it reads GSTATG. Catalysis depends on E294, which acts as the Proton acceptor. Substrate is bound at residue R322. C328 (nucleophile) is an active-site residue. A disulfide bridge connects residues C328 and C330. K353 carries the N6-acetyllysine modification. At K390 the chain carries N6-succinyllysine. At K399 the chain carries N6-acetyllysine. S486 contacts substrate. A Phosphoserine modification is found at S487.

It belongs to the aldehyde dehydrogenase family. Homotetramer. Brain, pancreas, heart, liver, skeletal muscle, kidney. Lower in spleen, lung, kidney and testis.

The protein localises to the mitochondrion. It carries out the reaction succinate semialdehyde + NAD(+) + H2O = succinate + NADH + 2 H(+). It functions in the pathway amino-acid degradation; 4-aminobutanoate degradation. With respect to regulation, redox-regulated. Inhibited under oxydizing conditions. In terms of biological role, catalyzes one step in the degradation of the inhibitory neurotransmitter gamma-aminobutyric acid (GABA). In Rattus norvegicus (Rat), this protein is Succinate-semialdehyde dehydrogenase, mitochondrial (Aldh5a1).